The chain runs to 310 residues: MFKFQKEQEIANIAGIKVGGQPGELPTVLAGTIFYNRHEIVEDAAKGLFDRDAAEKLVNLQESGSDTTGNPHMVHIFGTTAESITRYIDFIAEVSDSPFLIDSPEGPVRAHAAGYVSEIGLADRAVYNSINMSINTSEMKALEQSDIDSSIILGFNAKDSSLQGRMEMLETGAGLLEEGLLSIADRCGIVNKLIDPSITPMGNGAGIALRMTIAAKAKWGHPTGSGIHNAPSAWNWLNRQKEKDPVLYKICDIGSTCLQQAAAGDFILYGPIEYAEYVFPMAAMSDIMIAEAVADLDIEPVERHPINFLV.

The protein belongs to the MtrH family. As to quaternary structure, may be part of a complex composed of 3 subunits; MtxA, MtxH and MtxX.

The protein is Putative methyltransferase mtx subunit H (mtxH) of Methanosarcina mazei (strain ATCC BAA-159 / DSM 3647 / Goe1 / Go1 / JCM 11833 / OCM 88) (Methanosarcina frisia).